The chain runs to 840 residues: OTU domain-containing protein 7B (840 aa).

Residues 49–88 (AGNLSPPFSGGSTCPKTPEKGGSDREPTRPSRPILQRQDD) form a disordered region. Over residues 65-77 (TPEKGGSDREPTR) the composition is skewed to basic and acidic residues. Ser-100 is modified (phosphoserine). The TRAF-binding stretch occupies residues 152-401 (ERDLIEQSML…AVDPGKGWEW (250 aa)). A catalytic region spans residues 167 to 440 (AGRLNWWVSM…VKWIPLSSDS (274 aa)). Residues 183–365 (LLPLATTGDG…QAHFSALVSM (183 aa)) form the OTU domain. The segment at 187–193 (ATTGDGN) is regulatory loop. Residue Asp-191 is part of the active site. The active-site Nucleophile is Cys-194. Catalysis depends on His-358, which acts as the Proton acceptor. A compositionally biased stretch (polar residues) spans 440–452 (SQAPLAQPESPTA). Disordered regions lie at residues 440–592 (SQAP…YSQE) and 653–710 (IMNG…VHCQ). 2 stretches are compositionally biased toward basic and acidic residues: residues 456-471 (DEPR…DKES) and 488-500 (SKRD…KRAD). Phosphoserine occurs at positions 464, 467, and 471. Residues 483–498 (RRKEKSKRDREKDKKR) carry the Nuclear localization signal motif. Over residues 531–541 (KPGGLGSGSGI) the composition is skewed to gly residues. Thr-730 is modified (phosphothreonine). An A20-type zinc finger spans residues 793-828 (PPTQTKCKQPNCSFYGHPETNNLCSCCYREELRRRE). Zn(2+) contacts are provided by Cys-799, Cys-804, Cys-816, and Cys-819.

This sequence belongs to the peptidase C64 family. Interacts with TRAF6. Interacts with PARK7, leading to inhibit deubiquitinase activity. Interacts with EGFR, ITCH and NEDD4. Interacts with TRAF3. Interacts with ZAP70 in activated T cells, but not in resting T cells. Post-translationally, phosphorylated by EGFR.

The protein localises to the cytoplasm. It localises to the nucleus. The enzyme catalyses Thiol-dependent hydrolysis of ester, thioester, amide, peptide and isopeptide bonds formed by the C-terminal Gly of ubiquitin (a 76-residue protein attached to proteins as an intracellular targeting signal).. Deubiquitinase activity is inhibited following interaction with PARK7. In terms of biological role, negative regulator of the non-canonical NF-kappa-B pathway that acts by mediating deubiquitination of TRAF3, an inhibitor of the NF-kappa-B pathway, thereby acting as a negative regulator of B-cell responses. In response to non-canonical NF-kappa-B stimuli, deubiquitinates 'Lys-48'-linked polyubiquitin chains of TRAF3, preventing TRAF3 proteolysis and over-activation of non-canonical NF-kappa-B. Negatively regulates mucosal immunity against infections. Deubiquitinates ZAP70, and thereby regulates T cell receptor (TCR) signaling that leads to the activation of NF-kappa-B. Plays a role in T cell homeostasis and is required for normal T cell responses, including production of IFNG and IL2. Mediates deubiquitination of EGFR. Has deubiquitinating activity toward 'Lys-11', 'Lys-48' and 'Lys-63'-linked polyubiquitin chains. Has a much higher catalytic rate with 'Lys-11'-linked polyubiquitin chains (in vitro); however the physiological significance of these data are unsure. Hydrolyzes both linear and branched forms of polyubiquitin. Acts as a regulator of mTORC1 and mTORC2 assembly by mediating 'Lys-63'-linked deubiquitination of MLST8, thereby promoting assembly of the mTORC2 complex, while inibiting formation of the mTORC1 complex. This is OTU domain-containing protein 7B (Otud7b) from Mus musculus (Mouse).